We begin with the raw amino-acid sequence, 519 residues long: ATP synthase subunit beta (519 aa).

Residues 1-26 (MAKAATPKRAPARAAAIPAAATPAAK) show a composition bias toward low complexity. Positions 1–40 (MAKAATPKRAPARAAAIPAAATPAAKPAKRASTRSAAARS) are disordered. Residue 197–204 (GGAGVGKT) participates in ATP binding.

It belongs to the ATPase alpha/beta chains family. In terms of assembly, F-type ATPases have 2 components, CF(1) - the catalytic core - and CF(0) - the membrane proton channel. CF(1) has five subunits: alpha(3), beta(3), gamma(1), delta(1), epsilon(1). CF(0) has three main subunits: a(1), b(2) and c(9-12). The alpha and beta chains form an alternating ring which encloses part of the gamma chain. CF(1) is attached to CF(0) by a central stalk formed by the gamma and epsilon chains, while a peripheral stalk is formed by the delta and b chains.

It is found in the cell inner membrane. The enzyme catalyses ATP + H2O + 4 H(+)(in) = ADP + phosphate + 5 H(+)(out). Produces ATP from ADP in the presence of a proton gradient across the membrane. The catalytic sites are hosted primarily by the beta subunits. The polypeptide is ATP synthase subunit beta (Chelativorans sp. (strain BNC1)).